The chain runs to 350 residues: MEERSMQKAGFLKEPIKHIGITKHNVVPMVEEMADMAFQARNLARAAFIVDLMQKDKECAVILTLAGSLISAGLKQVIIDMLEHNMVDVIVSTGANIVDQDFFEALGFKHWKGSQFVDDSELRELAIDRIYDTYIDEDELRVCDDTIAIIANSMQPGAYSSREFIVEMGKYIEEKGLDKNSIVYKAYEKGVPIFCPAFSDCSAGFGLVHHQWHNPDQHVSIDSVKDFRELTKIKIENDKTGIFMIGGGVPKNFTQDIVVAAEVLGYENVSMHTYAVQITVADERDGALSGSTLKEASSWGKVDTVYEQMVFAEATVAMPLIAGYAYHKRNWEGRPARNFNAMLDAKPVNA.

The protein belongs to the deoxyhypusine synthase family.

In Chlorobaculum tepidum (strain ATCC 49652 / DSM 12025 / NBRC 103806 / TLS) (Chlorobium tepidum), this protein is Deoxyhypusine synthase-like protein.